Reading from the N-terminus, the 262-residue chain is Carboxy-S-adenosyl-L-methionine synthase (262 aa).

Residues Y50, 84–86 (GCS), 137–138 (DI), N152, and R219 contribute to the S-adenosyl-L-methionine site.

Belongs to the class I-like SAM-binding methyltransferase superfamily. Cx-SAM synthase family. In terms of assembly, homodimer.

The enzyme catalyses prephenate + S-adenosyl-L-methionine = carboxy-S-adenosyl-L-methionine + 3-phenylpyruvate + H2O. Functionally, catalyzes the conversion of S-adenosyl-L-methionine (SAM) to carboxy-S-adenosyl-L-methionine (Cx-SAM). The polypeptide is Carboxy-S-adenosyl-L-methionine synthase (Psychrobacter arcticus (strain DSM 17307 / VKM B-2377 / 273-4)).